A 247-amino-acid chain; its full sequence is Adenosylcobinamide-GDP ribazoletransferase (247 aa).

The next 5 membrane-spanning stretches (helical) occupy residues 34-54, 59-79, 113-133, 138-158, and 187-207; these read IVMF…IFIL, CGIP…TGGF, GGLA…ELAL, MLAA…LLMY, and LAVI…AMVV.

The protein belongs to the CobS family. Mg(2+) is required as a cofactor.

The protein resides in the cell inner membrane. It carries out the reaction alpha-ribazole + adenosylcob(III)inamide-GDP = adenosylcob(III)alamin + GMP + H(+). The enzyme catalyses alpha-ribazole 5'-phosphate + adenosylcob(III)inamide-GDP = adenosylcob(III)alamin 5'-phosphate + GMP + H(+). It participates in cofactor biosynthesis; adenosylcobalamin biosynthesis; adenosylcobalamin from cob(II)yrinate a,c-diamide: step 7/7. Joins adenosylcobinamide-GDP and alpha-ribazole to generate adenosylcobalamin (Ado-cobalamin). Also synthesizes adenosylcobalamin 5'-phosphate from adenosylcobinamide-GDP and alpha-ribazole 5'-phosphate. The sequence is that of Adenosylcobinamide-GDP ribazoletransferase from Salmonella dublin (strain CT_02021853).